A 237-amino-acid polypeptide reads, in one-letter code: tRNA (guanine-N(1)-)-methyltransferase (237 aa).

S-adenosyl-L-methionine is bound by residues glycine 112 and isoleucine 132–leucine 137.

The protein belongs to the RNA methyltransferase TrmD family. As to quaternary structure, homodimer.

It is found in the cytoplasm. It carries out the reaction guanosine(37) in tRNA + S-adenosyl-L-methionine = N(1)-methylguanosine(37) in tRNA + S-adenosyl-L-homocysteine + H(+). Functionally, specifically methylates guanosine-37 in various tRNAs. The polypeptide is tRNA (guanine-N(1)-)-methyltransferase (Thermosynechococcus vestitus (strain NIES-2133 / IAM M-273 / BP-1)).